The primary structure comprises 293 residues: MKI67 FHA domain-interacting nucleolar phosphoprotein (293 aa).

Position 2 is an N-acetylalanine (Ala2). A Glycyl lysine isopeptide (Lys-Gly) (interchain with G-Cter in SUMO2) cross-link involves residue Lys38. Positions 45–123 constitute an RRM domain; that stretch reads GVVYVRHLPN…RLLECHFMPP (79 aa). Arg114 is modified (omega-N-methylarginine; by PRMT1 and PRMT8). Residue Lys139 forms a Glycyl lysine isopeptide (Lys-Gly) (interchain with G-Cter in SUMO2) linkage. The residue at position 145 (Ser145) is a Phosphoserine. Glycyl lysine isopeptide (Lys-Gly) (interchain with G-Cter in SUMO2) cross-links involve residues Lys179 and Lys192. The segment covering 197–207 has biased composition (polar residues); that stretch reads SKTNRQTSTKG. The segment at 197-239 is disordered; that stretch reads SKTNRQTSTKGQVLRKKKKKVSGTLDTPEKTVDSQGPTPVCTP. Ser218 carries the phosphoserine modification. Thr223 is subject to Phosphothreonine. The segment at 226-269 is interaction with MKI67; that stretch reads KTVDSQGPTPVCTPTFLERRKSQVAELNDDDKDDEIVFKQPISC. Ser230 carries the phosphoserine modification. Phosphothreonine occurs at positions 234 and 238. Omega-N-methylated arginine; by PRMT1 and PRMT8 occurs at positions 244 and 245. A Phosphoserine modification is found at Ser247. Lys271 participates in a covalent cross-link: Glycyl lysine isopeptide (Lys-Gly) (interchain with G-Cter in SUMO1); alternate. Lys271 participates in a covalent cross-link: Glycyl lysine isopeptide (Lys-Gly) (interchain with G-Cter in SUMO2); alternate. A disordered region spans residues 271–293; the sequence is KEEIQETQTPTHSRKKRRRSSNQ. Thr279 carries the phosphothreonine modification. Basic residues predominate over residues 282–293; it reads HSRKKRRRSSNQ. Arg284 carries the post-translational modification Omega-N-methylarginine; by PRMT1 and PRMT8.

As to quaternary structure, binds to the FHA domain of MKI67; this interaction is enhanced in mitosis. In terms of processing, sequentially phosphorylated on Thr-238, Thr-234 and Ser-230. Thr-234 is phosphorylated only when Thr-238 is phosphorylated. Likewise, phosphorylation at Ser-230 requires that Thr-234 and Thr-238 are phosphorylated. Phosphorylation enhances MKI67 binding.

It is found in the nucleus. The protein resides in the nucleolus. The protein localises to the chromosome. The chain is MKI67 FHA domain-interacting nucleolar phosphoprotein (NIFK) from Homo sapiens (Human).